The primary structure comprises 580 residues: M-phase inducer phosphatase 2 (580 aa).

A disordered region spans residues 1–24 (MEVPQPEPAPGSALSPAGVCGGAQ). A Phosphoserine modification is found at S42. Residues 89–107 (SLSRRASESSLSSESSESS) are compositionally biased toward low complexity. Disordered stretches follow at residues 89-117 (SLSRRASESSLSSESSESSDAGLCMDSPS) and 165-196 (NITNSQAPDGRRKSEAGSGAASSSGEDKENDG). Position 169 is a phosphoserine; by MELK (S169). Position 249 is a phosphoserine (S249). S323 carries the phosphoserine; by MELK and MAPK14 modification. Residues 331–370 (PILKRLERPQDRDTPVQNKRRRSVTPPEEQQEAEEPKARV) form a disordered region. The span at 334–344 (KRLERPQDRDT) shows a compositional bias: basic and acidic residues. A Phosphoserine; by AURKA modification is found at S353. S375 carries the phosphoserine; by BRSK1 and MAPK14 modification. The 108-residue stretch at 431-538 (IVDKFVIVDC…FFPQHPNFCE (108 aa)) folds into the Rhodanese domain. The residue at position 470 (S470) is a Phosphoserine. C487 is a catalytic residue. Position 563 is a phosphoserine (S563).

This sequence belongs to the MPI phosphatase family. In terms of assembly, interacts with MAPK14 and 14-3-3 proteins. Phosphorylated by BRSK1 in vitro. Phosphorylated by CHEK1, which inhibits the activity of this protein. Phosphorylation at Ser-353 by AURKA might locally participate in the control of the onset of mitosis. Phosphorylation by MELK at Ser-169 promotes localization to the centrosome and the spindle poles during mitosis. Phosphorylation at Ser-323 and Ser-375 by MAPK14 is required for binding to 14-3-3 proteins.

Its subcellular location is the cytoplasm. The protein localises to the cytoskeleton. The protein resides in the microtubule organizing center. It is found in the centrosome. It localises to the spindle pole. The enzyme catalyses O-phospho-L-tyrosyl-[protein] + H2O = L-tyrosyl-[protein] + phosphate. Its activity is regulated as follows. Stimulated by B-type cyclins. Functionally, tyrosine protein phosphatase which functions as a dosage-dependent inducer of mitotic progression. Directly dephosphorylates CDK1 and stimulates its kinase activity. Required for G2/M phases of the cell cycle progression and abscission during cytokinesis in a ECT2-dependent manner. The three isoforms seem to have a different level of activity. The protein is M-phase inducer phosphatase 2 (CDC25B) of Homo sapiens (Human).